Consider the following 343-residue polypeptide: Nuclear hormone receptor family member nhr-167 (343 aa).

The nuclear receptor DNA-binding region spans histidine 5 to leucine 81. 2 consecutive NR C4-type zinc fingers follow at residues cysteine 8–cysteine 28 and cysteine 45–cysteine 64. The 239-residue stretch at threonine 101–alanine 339 folds into the NR LBD domain.

Belongs to the nuclear hormone receptor family.

It localises to the nucleus. Orphan nuclear receptor. The sequence is that of Nuclear hormone receptor family member nhr-167 (nhr-167) from Caenorhabditis elegans.